The primary structure comprises 81 residues: Photosystem I iron-sulfur center (81 aa).

4Fe-4S ferredoxin-type domains follow at residues 2–31 (AHSVKVYDTCIGCTQCVRACPCDVLEMVPR) and 39–68 (IASAPRTEDCIGCKRCETACPTDFLSVRVY). Residues cysteine 11, cysteine 14, cysteine 17, cysteine 21, cysteine 48, cysteine 51, cysteine 54, and cysteine 58 each coordinate [4Fe-4S] cluster.

In terms of assembly, the eukaryotic PSI reaction center is composed of at least 11 subunits. It depends on [4Fe-4S] cluster as a cofactor.

It localises to the plastid. Its subcellular location is the chloroplast thylakoid membrane. The enzyme catalyses reduced [plastocyanin] + hnu + oxidized [2Fe-2S]-[ferredoxin] = oxidized [plastocyanin] + reduced [2Fe-2S]-[ferredoxin]. Apoprotein for the two 4Fe-4S centers FA and FB of photosystem I (PSI); essential for photochemical activity. FB is the terminal electron acceptor of PSI, donating electrons to ferredoxin. The C-terminus interacts with PsaA/B/D and helps assemble the protein into the PSI complex. Required for binding of PsaD and PsaE to PSI. PSI is a plastocyanin/cytochrome c6-ferredoxin oxidoreductase, converting photonic excitation into a charge separation, which transfers an electron from the donor P700 chlorophyll pair to the spectroscopically characterized acceptors A0, A1, FX, FA and FB in turn. The chain is Photosystem I iron-sulfur center from Antithamnion sp. (Red alga).